Reading from the N-terminus, the 468-residue chain is Citrate synthase, mitochondrial (468 aa).

Residues 1–30 (MSLISAGRVCARILGAKNSPCALIAARQAS) constitute a mitochondrion transit peptide. Residues His303 and His349 contribute to the active site. Arg358 serves as a coordination point for oxaloacetate. Asp404 is a catalytic residue. Positions 430 and 450 each coordinate oxaloacetate.

The protein belongs to the citrate synthase family. Homodimer.

The protein localises to the mitochondrion matrix. It catalyses the reaction oxaloacetate + acetyl-CoA + H2O = citrate + CoA + H(+). Its pathway is carbohydrate metabolism; tricarboxylic acid cycle; isocitrate from oxaloacetate: step 1/2. Its function is as follows. Key enzyme of the Krebs tricarboxylic acid cycle which catalyzes the synthesis of citrate from acetyl coenzyme A and oxaloacetate. This is Citrate synthase, mitochondrial (cs) from Xenopus laevis (African clawed frog).